We begin with the raw amino-acid sequence, 320 residues long: NAD-dependent protein deacylase SIR2rp2 (320 aa).

Residues 1–22 constitute a mitochondrion transit peptide; sequence MRPAGTLASFLERCSARKRGRG. Residues 23-320 enclose the Deacetylase sirtuin-type domain; sequence CVVLTGAGCS…MFFRRKTIQL (298 aa). Residues 28 to 48 and 108 to 111 each bind NAD(+); these read GAGCSTESGIPDYRGPNGQYH and QNVD. Histidine 144 acts as the Proton acceptor in catalysis. Residues cysteine 152, cysteine 155, cysteine 207, and cysteine 210 each coordinate Zn(2+). Residues 248–250, 274–276, and glycine 294 contribute to the NAD(+) site; these read GTS and NAG.

Belongs to the sirtuin family. Class II subfamily. The cofactor is Zn(2+).

The protein resides in the mitochondrion matrix. The catalysed reaction is N(6)-acetyl-L-lysyl-[protein] + NAD(+) + H2O = 2''-O-acetyl-ADP-D-ribose + nicotinamide + L-lysyl-[protein]. Functionally, NAD-dependent protein deacylase. Catalyzes the NAD-dependent hydrolysis of acyl groups from lysine residues. The chain is NAD-dependent protein deacylase SIR2rp2 (SIR2rp2) from Leishmania major.